Consider the following 290-residue polypeptide: Membrane protein insertase YidC 1 (290 aa).

The signal sequence occupies residues 1–19 (MKKKALLPLFLGIMIFLAG). The N-palmitoyl cysteine moiety is linked to residue Cys-20. Cys-20 carries the S-diacylglycerol cysteine lipid modification. The next 5 membrane-spanning stretches (helical) occupy residues 56–76 (FGLA…PFML), 134–154 (MLGC…YFVL), 176–196 (PDIW…VVSS), 211–231 (MVIS…ALGL), and 232–252 (YWSV…IYYS). The tract at residues 270–290 (HNPYSKKKGKNTQVVSKKNKK) is disordered. Over residues 280-290 (NTQVVSKKNKK) the composition is skewed to polar residues.

This sequence belongs to the OXA1/ALB3/YidC family. Type 2 subfamily.

The protein resides in the cell membrane. In terms of biological role, required for the insertion and/or proper folding and/or complex formation of integral membrane proteins into the membrane. Involved in integration of membrane proteins that insert both dependently and independently of the Sec translocase complex, as well as at least some lipoproteins. This Staphylococcus epidermidis (strain ATCC 12228 / FDA PCI 1200) protein is Membrane protein insertase YidC 1.